The chain runs to 198 residues: Glycerol-3-phosphate acyltransferase (198 aa).

Transmembrane regions (helical) follow at residues 1-21 (MILITSLAVLVSYLIGSIPAA), 52-72 (GPALLVAAFDILKGAIAVGLA), 81-101 (WTALCGVAAVLGHNFSPFLGF), 115-135 (LALDPVVGGGAFVVGVGCIWL), and 153-173 (LAAALARPGWLLLIVAFLAAL).

Belongs to the PlsY family. Probably interacts with PlsX.

Its subcellular location is the cell membrane. The enzyme catalyses an acyl phosphate + sn-glycerol 3-phosphate = a 1-acyl-sn-glycero-3-phosphate + phosphate. Its pathway is lipid metabolism; phospholipid metabolism. Functionally, catalyzes the transfer of an acyl group from acyl-phosphate (acyl-PO(4)) to glycerol-3-phosphate (G3P) to form lysophosphatidic acid (LPA). This enzyme utilizes acyl-phosphate as fatty acyl donor, but not acyl-CoA or acyl-ACP. In Deinococcus geothermalis (strain DSM 11300 / CIP 105573 / AG-3a), this protein is Glycerol-3-phosphate acyltransferase.